We begin with the raw amino-acid sequence, 702 residues long: Phosphoribosylformylglycinamidine synthase subunit PurL (702 aa).

The active site involves His36. 2 residues coordinate ATP: Tyr39 and Lys80. Glu82 is a Mg(2+) binding site. Residues 83 to 86 (SHNH) and Arg105 contribute to the substrate site. His84 serves as the catalytic Proton acceptor. A Mg(2+)-binding site is contributed by Asp106. Gln225 contacts substrate. Asp251 serves as a coordination point for Mg(2+). 293-295 (ETQ) contributes to the substrate binding site. The ATP site is built by Asp468 and Gly505. Ser508 lines the substrate pocket.

This sequence belongs to the FGAMS family. As to quaternary structure, monomer. Part of the FGAM synthase complex composed of 1 PurL, 1 PurQ and 2 PurS subunits.

The protein resides in the cytoplasm. It carries out the reaction N(2)-formyl-N(1)-(5-phospho-beta-D-ribosyl)glycinamide + L-glutamine + ATP + H2O = 2-formamido-N(1)-(5-O-phospho-beta-D-ribosyl)acetamidine + L-glutamate + ADP + phosphate + H(+). It participates in purine metabolism; IMP biosynthesis via de novo pathway; 5-amino-1-(5-phospho-D-ribosyl)imidazole from N(2)-formyl-N(1)-(5-phospho-D-ribosyl)glycinamide: step 1/2. In terms of biological role, part of the phosphoribosylformylglycinamidine synthase complex involved in the purines biosynthetic pathway. Catalyzes the ATP-dependent conversion of formylglycinamide ribonucleotide (FGAR) and glutamine to yield formylglycinamidine ribonucleotide (FGAM) and glutamate. The FGAM synthase complex is composed of three subunits. PurQ produces an ammonia molecule by converting glutamine to glutamate. PurL transfers the ammonia molecule to FGAR to form FGAM in an ATP-dependent manner. PurS interacts with PurQ and PurL and is thought to assist in the transfer of the ammonia molecule from PurQ to PurL. This chain is Phosphoribosylformylglycinamidine synthase subunit PurL, found in Metallosphaera sedula (strain ATCC 51363 / DSM 5348 / JCM 9185 / NBRC 15509 / TH2).